The sequence spans 557 residues: 2,3-bisphosphoglycerate-independent phosphoglycerate mutase 1 (557 aa).

Positions 27 and 80 each coordinate Mn(2+). Serine 80 serves as the catalytic Phosphoserine intermediate. Substrate-binding positions include histidine 139, 169–170 (RD), arginine 205, arginine 212, 285–288 (RADR), and lysine 360. Residues aspartate 429, histidine 433, aspartate 470, histidine 471, and histidine 500 each coordinate Mn(2+).

This sequence belongs to the BPG-independent phosphoglycerate mutase family. In terms of assembly, monomer. Mn(2+) serves as cofactor.

The protein localises to the cytoplasm. It catalyses the reaction (2R)-2-phosphoglycerate = (2R)-3-phosphoglycerate. Its pathway is carbohydrate degradation; glycolysis; pyruvate from D-glyceraldehyde 3-phosphate: step 3/5. Catalyzes the interconversion of 2-phosphoglycerate (2-PGA) and 3-phosphoglycerate (3-PGA). Required for guard cell function (e.g. blue light-, abscisic acid- (ABA), and low CO(2)-regulated stomatal movements) and fertility (e.g. pollen grains production). The sequence is that of 2,3-bisphosphoglycerate-independent phosphoglycerate mutase 1 (PGM1) from Arabidopsis thaliana (Mouse-ear cress).